The sequence spans 395 residues: Renin (395 aa).

The signal sequence occupies residues Met1–Ala21. A propeptide spans Leu22–Lys43 (activation peptide). Residue Asn64 is glycosylated (N-linked (GlcNAc...) asparagine). The Peptidase A1 domain occupies Tyr79–Ala392. Asp97 is a catalytic residue. Disulfide bonds link Cys110–Cys117 and Cys274–Cys278. The active site involves Asp283. Residues Cys316 and Cys351 are joined by a disulfide bond.

It belongs to the peptidase A1 family. N-glycosylated. As to expression, expressed by the venom gland (at protein level).

The protein resides in the secreted. It catalyses the reaction Cleavage of Leu-|-Xaa bond in angiotensinogen to generate angiotensin I.. Inhibited completely by aspartyl protease inhibitor pepstatin A, but not by the serine- or metalloproteinase inhibitors PMSF or EDTA. Functionally, renin is a highly specific endopeptidase, whose only known function is to generate angiotensin I from angiotensinogen in the plasma, initiating a cascade of reactions that produce an elevation of blood pressure and increased sodium retention by the kidney. This protein is also found in snake venom and shown to specifically cleave human and porcine angiotensinogen into angiotensin I. It does not have general protease activity, no cleavage of alpha or beta casein. May be directly responsible for elevation of blood pressure in the victims of envenomation. The chain is Renin from Echis ocellatus (Ocellated saw-scaled viper).